The sequence spans 121 residues: Large ribosomal subunit protein bL12 (121 aa).

Belongs to the bacterial ribosomal protein bL12 family. As to quaternary structure, homodimer. Part of the ribosomal stalk of the 50S ribosomal subunit. Forms a multimeric L10(L12)X complex, where L10 forms an elongated spine to which 2 to 4 L12 dimers bind in a sequential fashion. Binds GTP-bound translation factors.

Forms part of the ribosomal stalk which helps the ribosome interact with GTP-bound translation factors. Is thus essential for accurate translation. The polypeptide is Large ribosomal subunit protein bL12 (Pseudomonas savastanoi pv. phaseolicola (strain 1448A / Race 6) (Pseudomonas syringae pv. phaseolicola (strain 1448A / Race 6))).